The sequence spans 310 residues: Serine protease 30 (310 aa).

The first 21 residues, 1–21 (MESRARCIFLLLLQILTRARG), serve as a signal peptide directing secretion. Positions 22–36 (DILPSVCGHSRDAGK) are cleaved as a propeptide — activation peptide. Residues 37–277 (IVGGQDALEG…YVDWIQRILA (241 aa)) enclose the Peptidase S1 domain. Cysteines 63 and 79 form a disulfide. Active-site charge relay system residues include His-78 and Asp-128. Intrachain disulfides connect Cys-161–Cys-235, Cys-191–Cys-214, and Cys-225–Cys-253. Residue Ser-229 is the Charge relay system of the active site. Residues Asn-238 and Asn-279 are each glycosylated (N-linked (GlcNAc...) asparagine). Residue Ser-281 is the site of GPI-anchor amidated serine attachment. Residues 282 to 310 (DAYGYHSSASAAYQMLLPVLLAVALPGSL) constitute a propeptide, removed in mature form.

It belongs to the peptidase S1 family. As to expression, expressed primarily in distal gut.

Its subcellular location is the cell membrane. Its activity is regulated as follows. Inhibited by aprotinin, leupeptin, benzamidine and soybean trypsin inhibitor. Partially inhibited by PMSF and DFP. Selectively cleaves synthetic peptide substrates of trypsin. Activates the epithelial sodium channel ENaC. This is Serine protease 30 (Prss30) from Mus musculus (Mouse).